The primary structure comprises 332 residues: Ferredoxin--NADP reductase 1 (332 aa).

Positions 35, 43, 48, 88, 123, 284, and 325 each coordinate FAD.

The protein belongs to the ferredoxin--NADP reductase type 2 family. In terms of assembly, homodimer. The cofactor is FAD.

It carries out the reaction 2 reduced [2Fe-2S]-[ferredoxin] + NADP(+) + H(+) = 2 oxidized [2Fe-2S]-[ferredoxin] + NADPH. This is Ferredoxin--NADP reductase 1 from Listeria welshimeri serovar 6b (strain ATCC 35897 / DSM 20650 / CCUG 15529 / CIP 8149 / NCTC 11857 / SLCC 5334 / V8).